A 796-amino-acid chain; its full sequence is Nuclear GTPase SLIP-GC (796 aa).

107-114 (GITGAGKS) provides a ligand contact to GTP. Coiled-coil stretches lie at residues 158-185 (SDQE…EEAD) and 742-776 (GLCK…LRRS).

Its subcellular location is the nucleus speckle. Functionally, nuclear GTPase found in germinal center B-cells, where it may inhibit function of the activation-induced cytidine deaminase AICDA. Reduces somatic hypermutation in B-cells which may enhance genome stability. This chain is Nuclear GTPase SLIP-GC, found in Mus musculus (Mouse).